The chain runs to 151 residues: MYKKIEIFTDGSCLGNPGPGGCAAILRYKQHKKEFSIGYRLTTNNRMELMAAIIALESLKNPCQIILNTDSQYLLHGITQWIHIWKKHHWKTSEEKLVKNIDLWQRLDVAIQIHSIIHWNWLKSHTGHPDNERCDQLARLAAKCPINEDFY.

The RNase H type-1 domain maps to 1–143; that stretch reads MYKKIEIFTD…CDQLARLAAK (143 aa). Mg(2+) is bound by residues Asp10, Glu48, Asp70, and Asp135.

This sequence belongs to the RNase H family. Monomer. Mg(2+) serves as cofactor.

Its subcellular location is the cytoplasm. The enzyme catalyses Endonucleolytic cleavage to 5'-phosphomonoester.. Its function is as follows. Endonuclease that specifically degrades the RNA of RNA-DNA hybrids. In Blochmanniella pennsylvanica (strain BPEN), this protein is Ribonuclease H.